Here is a 45-residue protein sequence, read N- to C-terminus: Movement protein P3a (45 aa).

The helical transmembrane segment at 9 to 29 threads the bilayer; sequence FALGFSSAIPFSVAGLYFVYL.

Belongs to the polerovirus movement protein P3a family. Homodimer. Heterodimer with movement protein P17.

Its subcellular location is the host cell junction. It localises to the host plasmodesma. The protein localises to the host Golgi apparatus. The protein resides in the host chloroplast envelope. It is found in the host mitochondrion outer membrane. Together with movement protein P17, plays an essential role in virus long distance movement. The sequence is that of Movement protein P3a (ORF3a) from Solanum tuberosum (Potato).